Reading from the N-terminus, the 352-residue chain is Protein RecA (352 aa).

67–74 (GPESSGKT) is a binding site for ATP.

Belongs to the RecA family.

The protein resides in the cytoplasm. Its function is as follows. Can catalyze the hydrolysis of ATP in the presence of single-stranded DNA, the ATP-dependent uptake of single-stranded DNA by duplex DNA, and the ATP-dependent hybridization of homologous single-stranded DNAs. It interacts with LexA causing its activation and leading to its autocatalytic cleavage. In Chlamydia trachomatis serovar L2 (strain ATCC VR-902B / DSM 19102 / 434/Bu), this protein is Protein RecA.